The primary structure comprises 338 residues: tRNA N6-adenosine threonylcarbamoyltransferase (338 aa).

Residues His111 and His115 each contribute to the Fe cation site. Substrate is bound by residues 134–138 (LVSGG), Asp167, Gly180, and Asn272. Fe cation is bound at residue Asp300.

The protein belongs to the KAE1 / TsaD family. Requires Fe(2+) as cofactor.

It is found in the cytoplasm. It carries out the reaction L-threonylcarbamoyladenylate + adenosine(37) in tRNA = N(6)-L-threonylcarbamoyladenosine(37) in tRNA + AMP + H(+). Required for the formation of a threonylcarbamoyl group on adenosine at position 37 (t(6)A37) in tRNAs that read codons beginning with adenine. Is involved in the transfer of the threonylcarbamoyl moiety of threonylcarbamoyl-AMP (TC-AMP) to the N6 group of A37, together with TsaE and TsaB. TsaD likely plays a direct catalytic role in this reaction. The polypeptide is tRNA N6-adenosine threonylcarbamoyltransferase (Shewanella baltica (strain OS223)).